Here is a 99-residue protein sequence, read N- to C-terminus: uncharacterized protein (99 aa).

Helical transmembrane passes span 7 to 29 (FFIS…YTLY), 39 to 61 (FISS…ARYN), and 68 to 90 (FCNL…LWLL).

Its subcellular location is the cell membrane. This is an uncharacterized protein from Archaeoglobus fulgidus (strain ATCC 49558 / DSM 4304 / JCM 9628 / NBRC 100126 / VC-16).